The sequence spans 130 residues: uncharacterized protein (130 aa).

A helical membrane pass occupies residues 21–43 (VAVCTVAAEVLAIFTLVCTRVFI).

It localises to the membrane. This is an uncharacterized protein from Saccharomyces cerevisiae (strain ATCC 204508 / S288c) (Baker's yeast).